Reading from the N-terminus, the 271-residue chain is Ribosomal RNA small subunit methyltransferase A (271 aa).

S-adenosyl-L-methionine-binding residues include His-11, Leu-13, Gly-38, Glu-59, Asp-84, and Asn-109.

This sequence belongs to the class I-like SAM-binding methyltransferase superfamily. rRNA adenine N(6)-methyltransferase family. RsmA subfamily.

It localises to the cytoplasm. The enzyme catalyses adenosine(1518)/adenosine(1519) in 16S rRNA + 4 S-adenosyl-L-methionine = N(6)-dimethyladenosine(1518)/N(6)-dimethyladenosine(1519) in 16S rRNA + 4 S-adenosyl-L-homocysteine + 4 H(+). In terms of biological role, specifically dimethylates two adjacent adenosines (A1518 and A1519) in the loop of a conserved hairpin near the 3'-end of 16S rRNA in the 30S particle. May play a critical role in biogenesis of 30S subunits. This Nostoc sp. (strain PCC 7120 / SAG 25.82 / UTEX 2576) protein is Ribosomal RNA small subunit methyltransferase A.